Reading from the N-terminus, the 313-residue chain is Type II methyltransferase M.NlaX (313 aa).

The SAM-dependent MTase C5-type domain occupies 2–308; that stretch reads FKIIDLFAGI…EQMKAALSAV (307 aa). The active site involves C74.

Belongs to the class I-like SAM-binding methyltransferase superfamily. C5-methyltransferase family.

It carries out the reaction a 2'-deoxycytidine in DNA + S-adenosyl-L-methionine = a 5-methyl-2'-deoxycytidine in DNA + S-adenosyl-L-homocysteine + H(+). Functionally, a methylase, recognizes the double-stranded sequence 5'-CCNGG-3' and methylates C-2 on both strands. May be the equivalent of dcm in this bacteria, or it may protect the DNA from cleavage by the putative NlaXP endonuclease. This is Type II methyltransferase M.NlaX (nlaXM) from Neisseria lactamica.